The sequence spans 459 residues: ATP synthase subunit beta (459 aa).

148 to 155 (GGAGVGKT) serves as a coordination point for ATP.

The protein belongs to the ATPase alpha/beta chains family. As to quaternary structure, F-type ATPases have 2 components, CF(1) - the catalytic core - and CF(0) - the membrane proton channel. CF(1) has five subunits: alpha(3), beta(3), gamma(1), delta(1), epsilon(1). CF(0) has three main subunits: a(1), b(2) and c(9-12). The alpha and beta chains form an alternating ring which encloses part of the gamma chain. CF(1) is attached to CF(0) by a central stalk formed by the gamma and epsilon chains, while a peripheral stalk is formed by the delta and b chains.

The protein resides in the cell inner membrane. The catalysed reaction is ATP + H2O + 4 H(+)(in) = ADP + phosphate + 5 H(+)(out). Functionally, produces ATP from ADP in the presence of a proton gradient across the membrane. The catalytic sites are hosted primarily by the beta subunits. The protein is ATP synthase subunit beta of Ruthia magnifica subsp. Calyptogena magnifica.